A 162-amino-acid polypeptide reads, in one-letter code: Small ribosomal subunit protein uS7m (162 aa).

It belongs to the universal ribosomal protein uS7 family. In terms of assembly, part of the small ribosomal subunit.

It is found in the mitochondrion. Functionally, one of the primary rRNA binding proteins, it binds directly to 16S-like rRNA where it nucleates assembly of the head domain of the small subunit. This is Small ribosomal subunit protein uS7m (mrps7) from Dictyostelium discoideum (Social amoeba).